Consider the following 203-residue polypeptide: Signal peptidase I (203 aa).

Positions 1–26 are disordered; sequence MSSESDSPTPQTPPAQPAASQPKADS. Residues 1-33 lie on the Cytoplasmic side of the membrane; the sequence is MSSESDSPTPQTPPAQPAASQPKADSPLMEGIK. The span at 17 to 26 shows a compositional bias: low complexity; sequence PAASQPKADS. The helical transmembrane segment at 34 to 50 threads the bilayer; it reads TIGLSVVLALGIRTFVA. The Extracellular segment spans residues 51 to 203; it reads EARYIPSESM…LGELGPPPSY (153 aa). Residues Ser-59 and Lys-109 contribute to the active site.

Belongs to the peptidase S26 family.

It is found in the cell membrane. The enzyme catalyses Cleavage of hydrophobic, N-terminal signal or leader sequences from secreted and periplasmic proteins.. In Leptolyngbya laminosa (Phormidium laminosum), this protein is Signal peptidase I (lepB).